The following is a 382-amino-acid chain: MSEYSIFTSESVSEGHPDKMADQISDAILDAIIKDDPHARVAVETMVKTGMAVVAGEVRTNTYVELEDIVRQVILDIGYDSSEKGFDGASCAVLNGIGKQSADIAIGVDEAEEKEMGAGDQGLMFGFATDETDTLMPAPVYYSHRLVERQAKLRKNSTLPWLRPDAKSQVTLRYDNGKPVAVDAVVLSTQHSPDIKLADLREAVMEEIIKPVLPEEWLHKDTLYHVNPTGIFVIGGPMGDCGLTGRKIIVDTYGGMARHGGGAFSGKDPSKVDRSAAYAGRYVAKNIVAAGLASKCEIQVSYAIGVAEPTSISVNTFGTGKISDSAIVDLVREHFDLRPRGIIEMLDLRKPIYRPTASYGHFGREGFSWEKTDKTEALKAAL.

ATP is bound at residue H16. D18 contributes to the Mg(2+) binding site. E44 provides a ligand contact to K(+). The L-methionine site is built by E57 and Q100. The tract at residues 100-110 (QSADIAIGVDE) is flexible loop. Residues 165–167 (DAK), D240, 246–247 (RK), A263, and K267 contribute to the ATP site. An L-methionine-binding site is contributed by D240. L-methionine is bound at residue K271.

Belongs to the AdoMet synthase family. In terms of assembly, homotetramer; dimer of dimers. It depends on Mg(2+) as a cofactor. K(+) serves as cofactor.

It localises to the cytoplasm. The catalysed reaction is L-methionine + ATP + H2O = S-adenosyl-L-methionine + phosphate + diphosphate. It functions in the pathway amino-acid biosynthesis; S-adenosyl-L-methionine biosynthesis; S-adenosyl-L-methionine from L-methionine: step 1/1. In terms of biological role, catalyzes the formation of S-adenosylmethionine (AdoMet) from methionine and ATP. The overall synthetic reaction is composed of two sequential steps, AdoMet formation and the subsequent tripolyphosphate hydrolysis which occurs prior to release of AdoMet from the enzyme. This is S-adenosylmethionine synthase from Alcanivorax borkumensis (strain ATCC 700651 / DSM 11573 / NCIMB 13689 / SK2).